Consider the following 330-residue polypeptide: Ketol-acid reductoisomerase (NADP(+)) (330 aa).

The KARI N-terminal Rossmann domain occupies 1 to 181; the sequence is MNAYYEQDAD…GGTKAGVIET (181 aa). NADP(+)-binding positions include 24–27, R47, S50, S52, and 82–85; these read FGSQ and DQYQ. The active site involves H107. Residue G133 coordinates NADP(+). The KARI C-terminal knotted domain maps to 182-327; the sequence is TFKNETETDL…AKLRDMMSWL (146 aa). Residues D190, E194, E226, and E230 each contribute to the Mg(2+) site. Residue S251 coordinates substrate.

This sequence belongs to the ketol-acid reductoisomerase family. Mg(2+) is required as a cofactor.

It carries out the reaction (2R)-2,3-dihydroxy-3-methylbutanoate + NADP(+) = (2S)-2-acetolactate + NADPH + H(+). It catalyses the reaction (2R,3R)-2,3-dihydroxy-3-methylpentanoate + NADP(+) = (S)-2-ethyl-2-hydroxy-3-oxobutanoate + NADPH + H(+). The protein operates within amino-acid biosynthesis; L-isoleucine biosynthesis; L-isoleucine from 2-oxobutanoate: step 2/4. Its pathway is amino-acid biosynthesis; L-valine biosynthesis; L-valine from pyruvate: step 2/4. Functionally, involved in the biosynthesis of branched-chain amino acids (BCAA). Catalyzes an alkyl-migration followed by a ketol-acid reduction of (S)-2-acetolactate (S2AL) to yield (R)-2,3-dihydroxy-isovalerate. In the isomerase reaction, S2AL is rearranged via a Mg-dependent methyl migration to produce 3-hydroxy-3-methyl-2-ketobutyrate (HMKB). In the reductase reaction, this 2-ketoacid undergoes a metal-dependent reduction by NADPH to yield (R)-2,3-dihydroxy-isovalerate. The protein is Ketol-acid reductoisomerase (NADP(+)) of Chlorobium phaeobacteroides (strain BS1).